Consider the following 529-residue polypeptide: Bifunctional purine biosynthesis protein PurH (529 aa).

One can recognise an MGS-like domain in the interval 1 to 148 (MQQRRPVRRA…KNHKDVAIVV (148 aa)). Residue K287 is modified to N6-acetyllysine.

This sequence belongs to the PurH family.

It carries out the reaction (6R)-10-formyltetrahydrofolate + 5-amino-1-(5-phospho-beta-D-ribosyl)imidazole-4-carboxamide = 5-formamido-1-(5-phospho-D-ribosyl)imidazole-4-carboxamide + (6S)-5,6,7,8-tetrahydrofolate. It catalyses the reaction IMP + H2O = 5-formamido-1-(5-phospho-D-ribosyl)imidazole-4-carboxamide. The protein operates within purine metabolism; IMP biosynthesis via de novo pathway; 5-formamido-1-(5-phospho-D-ribosyl)imidazole-4-carboxamide from 5-amino-1-(5-phospho-D-ribosyl)imidazole-4-carboxamide (10-formyl THF route): step 1/1. It participates in purine metabolism; IMP biosynthesis via de novo pathway; IMP from 5-formamido-1-(5-phospho-D-ribosyl)imidazole-4-carboxamide: step 1/1. In Escherichia coli O8 (strain IAI1), this protein is Bifunctional purine biosynthesis protein PurH.